An 82-amino-acid chain; its full sequence is DNA gyrase inhibitor YacG (82 aa).

4 residues coordinate Zn(2+): Cys9, Cys12, Cys27, and Cys31. The tract at residues 44–82 is disordered; the sequence is IGLPHEGDPGDAPVEYLDDRDLTQPSPERQNESFHRYSE. Over residues 72 to 82 the composition is skewed to basic and acidic residues; sequence RQNESFHRYSE.

The protein belongs to the DNA gyrase inhibitor YacG family. As to quaternary structure, interacts with GyrB. Zn(2+) is required as a cofactor.

In terms of biological role, inhibits all the catalytic activities of DNA gyrase by preventing its interaction with DNA. Acts by binding directly to the C-terminal domain of GyrB, which probably disrupts DNA binding by the gyrase. The sequence is that of DNA gyrase inhibitor YacG from Rhodopirellula baltica (strain DSM 10527 / NCIMB 13988 / SH1).